A 423-amino-acid chain; its full sequence is uncharacterized protein (423 aa).

Belongs to the IIV-6 198R family.

This is an uncharacterized protein from Aedes vexans (Inland floodwater mosquito).